The chain runs to 1777 residues: Non-reducing polyketide synthase nscA (1777 aa).

The N-terminal acylcarrier protein transacylase domain (SAT) stretch occupies residues 27–261 (DLFRRLDQHS…PLPVYDGLCH (235 aa)). Residues 396–829 (SSKLAIVGMA…GGNTTLLLED (434 aa)) form the Ketosynthase family 3 (KS3) domain. Residues cysteine 569, histidine 704, and histidine 747 each act as for beta-ketoacyl synthase activity in the active site. The interval 934-1212 (AFTGQGAYYH…SAIPSCRRNE (279 aa)) is malonyl-CoA:ACP transacylase (MAT) domain. A product template (PT) domain region spans residues 1297–1616 (TSLVHQITAE…RLLMDRFFSP (320 aa)). Residues 1301 to 1437 (HQITAETVEA…ATIRFEDPEA (137 aa)) form an N-terminal hotdog fold region. In terms of domain architecture, PKS/mFAS DH spans 1301 to 1611 (HQITAETVEA…FRRVPRLLMD (311 aa)). The active-site Proton acceptor; for dehydratase activity is histidine 1333. The interval 1465–1611 (ASRLSKPLAY…FRRVPRLLMD (147 aa)) is C-terminal hotdog fold. Catalysis depends on aspartate 1522, which acts as the Proton donor; for dehydratase activity. A disordered region spans residues 1674 to 1704 (LLATSSKSSTPKESPIVTPAESERAEPVDNS). Residues 1677–1688 (TSSKSSTPKESP) show a composition bias toward low complexity. Residues 1700–1777 (PVDNSMTSQC…EMTAWIEEYC (78 aa)) form the Carrier domain. Serine 1737 is subject to O-(pantetheine 4'-phosphoryl)serine.

The cofactor is pantetheine 4'-phosphate.

Its pathway is secondary metabolite biosynthesis. In terms of biological role, non-reducing polyketide synthase; part of the gene cluster that mediates the biosynthesis of neosartoricin B, a prenylated anthracenone that probably exhibits T-cell antiproliferative activity, suggestive of a physiological role as an immunosuppressive agent. The non-reducing polyketide synthase nscA probably synthesizes and cyclizes the decaketide backbone. The hydrolase nscB then mediates the product release through hydrolysis followed by spontaneous decarboxylation. The prenyltransferase nscD catalyzes the addition of the dimethylallyl group to the aromatic C5. The FAD-dependent monooxygenase nscC is then responsible for the stereospecific hydroxylation at C2. Neosartoricin B can be converted into two additional compounds neosartoricins C and D. Neosartoricin C is a spirocyclic compound that is cyclized through the attack of C3 hydroxyl on C14, followed by dehydration. On the other hand, neosartoricin D is a further cyclized compound in which attack of C2 on C14 in neosartoricin C results in the formation of the acetal-containing dioxabicyclo-octanone ring. Both of these compounds are novel and possibly represent related metabolites of the gene cluster. This Trichophyton equinum (strain ATCC MYA-4606 / CBS 127.97) (Horse ringworm fungus) protein is Non-reducing polyketide synthase nscA.